The sequence spans 484 residues: Glutathione reductase (484 aa).

FAD-binding residues include S32 and G33. Residue S32 participates in glutathione binding. R39 contributes to the glutathione binding site. The FAD site is built by E52, T59, C60, and K68. An intrachain disulfide couples C60 to C65. Y122 provides a ligand contact to glutathione. A138 lines the FAD pocket. NADP(+) contacts are provided by A204, I207, E210, R227, and R233. T242 lines the glutathione pocket. G293 is an NADP(+) binding site. Position 333 (D333) interacts with FAD. E339 is a binding site for NADP(+). T341 provides a ligand contact to FAD. R349 contributes to the glutathione binding site. V374 lines the NADP(+) pocket. Glutathione is bound at residue K426. H473 serves as a coordination point for FAD. The active-site Proton acceptor is the H473.

This sequence belongs to the class-I pyridine nucleotide-disulfide oxidoreductase family. Homodimer. FAD is required as a cofactor.

The protein localises to the cytoplasm. The protein resides in the mitochondrion. It catalyses the reaction 2 glutathione + NADP(+) = glutathione disulfide + NADPH + H(+). In terms of biological role, catalyzes the reduction of glutathione disulfide (GSSG) to reduced glutathione (GSH). Constitutes the major mechanism to maintain a high GSH:GSSG ratio in the cytosol. This is Glutathione reductase (GLR1) from Kluyveromyces lactis (strain ATCC 8585 / CBS 2359 / DSM 70799 / NBRC 1267 / NRRL Y-1140 / WM37) (Yeast).